The primary structure comprises 522 residues: Zinc finger protein 329 (522 aa).

Ser-30 carries the post-translational modification Phosphoserine. 12 consecutive C2H2-type zinc fingers follow at residues 184 to 206 (YKCA…HRTH), 212 to 234 (YTCN…RRIH), 240 to 262 (YKCS…QRIH), 268 to 290 (YACL…QRTH), 296 to 318 (YRCN…LRIH), 324 to 346 (YECS…ERTH), 352 to 374 (FECV…QKIH), 380 to 402 (YECK…QRVH), 408 to 430 (YGCN…QRIH), 436 to 458 (YECN…QRIH), 464 to 486 (YQCL…QRLH), and 492 to 514 (SQCP…QRTH).

The protein belongs to the krueppel C2H2-type zinc-finger protein family.

Its subcellular location is the nucleus. Its function is as follows. May be involved in transcriptional regulation. The protein is Zinc finger protein 329 (Znf329) of Mus musculus (Mouse).